Here is a 248-residue protein sequence, read N- to C-terminus: Isoprenyl transferase (248 aa).

Residue aspartate 23 is part of the active site. Aspartate 23 serves as a coordination point for Mg(2+). Residues 24–27 (GNGR), tryptophan 28, arginine 36, histidine 40, and 68–70 (STE) contribute to the substrate site. The active-site Proton acceptor is the asparagine 71. Substrate is bound by residues tryptophan 72, arginine 74, arginine 185, and 191-193 (RIS). Glutamate 204 is a binding site for Mg(2+).

This sequence belongs to the UPP synthase family. In terms of assembly, homodimer. The cofactor is Mg(2+).

Its function is as follows. Catalyzes the condensation of isopentenyl diphosphate (IPP) with allylic pyrophosphates generating different type of terpenoids. In Neisseria meningitidis serogroup A / serotype 4A (strain DSM 15465 / Z2491), this protein is Isoprenyl transferase.